The chain runs to 896 residues: Valine--tRNA ligase (896 aa).

Positions 43-53 (PNVTGSLHIGH) match the 'HIGH' region motif. A 'KMSKS' region motif is present at residues 545–549 (KMSKS). Lys-548 serves as a coordination point for ATP. Residues 831–857 (DLDAERARLAKGIAAAEKERDGLAARL) adopt a coiled-coil conformation.

This sequence belongs to the class-I aminoacyl-tRNA synthetase family. ValS type 1 subfamily. Monomer.

It is found in the cytoplasm. The catalysed reaction is tRNA(Val) + L-valine + ATP = L-valyl-tRNA(Val) + AMP + diphosphate. In terms of biological role, catalyzes the attachment of valine to tRNA(Val). As ValRS can inadvertently accommodate and process structurally similar amino acids such as threonine, to avoid such errors, it has a 'posttransfer' editing activity that hydrolyzes mischarged Thr-tRNA(Val) in a tRNA-dependent manner. The protein is Valine--tRNA ligase of Rhizorhabdus wittichii (strain DSM 6014 / CCUG 31198 / JCM 15750 / NBRC 105917 / EY 4224 / RW1) (Sphingomonas wittichii).